Reading from the N-terminus, the 250-residue chain is Adenosine 5'-phosphosulfate reductase (250 aa).

Residues Cys-119, Cys-120, Cys-202, and Cys-205 each contribute to the [4Fe-4S] cluster site. The active-site Nucleophile; cysteine thiosulfonate intermediate is the Cys-230.

The protein belongs to the PAPS reductase family. CysH subfamily. It depends on [4Fe-4S] cluster as a cofactor.

It is found in the cytoplasm. The catalysed reaction is [thioredoxin]-disulfide + sulfite + AMP + 2 H(+) = adenosine 5'-phosphosulfate + [thioredoxin]-dithiol. Its pathway is sulfur metabolism; hydrogen sulfide biosynthesis; sulfite from sulfate. In terms of biological role, catalyzes the formation of sulfite from adenosine 5'-phosphosulfate (APS) using thioredoxin as an electron donor. The polypeptide is Adenosine 5'-phosphosulfate reductase (Burkholderia cepacia (Pseudomonas cepacia)).